Reading from the N-terminus, the 433-residue chain is 4-hydroxy-3-methylbut-2-en-1-yl diphosphate synthase (flavodoxin) (433 aa).

Residues 1-13 (MNKPETVTENSLA) are compositionally biased toward polar residues. The interval 1 to 23 (MNKPETVTENSLASDVAGPAPRH) is disordered. Residues Cys-314, Cys-317, Cys-360, and Glu-367 each contribute to the [4Fe-4S] cluster site.

This sequence belongs to the IspG family. Requires [4Fe-4S] cluster as cofactor.

It carries out the reaction (2E)-4-hydroxy-3-methylbut-2-enyl diphosphate + oxidized [flavodoxin] + H2O + 2 H(+) = 2-C-methyl-D-erythritol 2,4-cyclic diphosphate + reduced [flavodoxin]. The protein operates within isoprenoid biosynthesis; isopentenyl diphosphate biosynthesis via DXP pathway; isopentenyl diphosphate from 1-deoxy-D-xylulose 5-phosphate: step 5/6. In terms of biological role, converts 2C-methyl-D-erythritol 2,4-cyclodiphosphate (ME-2,4cPP) into 1-hydroxy-2-methyl-2-(E)-butenyl 4-diphosphate. The chain is 4-hydroxy-3-methylbut-2-en-1-yl diphosphate synthase (flavodoxin) from Bradyrhizobium sp. (strain ORS 278).